Reading from the N-terminus, the 447-residue chain is Glutamate-1-semialdehyde 2,1-aminomutase (447 aa).

Lys-277 bears the N6-(pyridoxal phosphate)lysine mark.

Belongs to the class-III pyridoxal-phosphate-dependent aminotransferase family. HemL subfamily. In terms of assembly, homodimer. The cofactor is pyridoxal 5'-phosphate.

Its subcellular location is the cytoplasm. It carries out the reaction (S)-4-amino-5-oxopentanoate = 5-aminolevulinate. It functions in the pathway porphyrin-containing compound metabolism; protoporphyrin-IX biosynthesis; 5-aminolevulinate from L-glutamyl-tRNA(Glu): step 2/2. This is Glutamate-1-semialdehyde 2,1-aminomutase from Arthrobacter sp. (strain FB24).